The primary structure comprises 91 residues: Small ribosomal subunit protein bS16 (91 aa).

The protein belongs to the bacterial ribosomal protein bS16 family.

This chain is Small ribosomal subunit protein bS16, found in Limosilactobacillus reuteri (strain DSM 20016) (Lactobacillus reuteri).